The chain runs to 322 residues: Transaldolase (322 aa).

The active-site Schiff-base intermediate with substrate is lysine 132.

This sequence belongs to the transaldolase family. Type 1 subfamily. As to quaternary structure, homodimer.

The protein localises to the cytoplasm. The enzyme catalyses D-sedoheptulose 7-phosphate + D-glyceraldehyde 3-phosphate = D-erythrose 4-phosphate + beta-D-fructose 6-phosphate. It participates in carbohydrate degradation; pentose phosphate pathway; D-glyceraldehyde 3-phosphate and beta-D-fructose 6-phosphate from D-ribose 5-phosphate and D-xylulose 5-phosphate (non-oxidative stage): step 2/3. Functionally, transaldolase is important for the balance of metabolites in the pentose-phosphate pathway. This is Transaldolase from Protochlamydia amoebophila (strain UWE25).